Reading from the N-terminus, the 116-residue chain is MAKDKSRSKEQVTREYTIHLSKRLHKTSFKKCAPKAVKEIRKFASKVMGTSDVRLDVKLNKAVWSKGIKNVPTRLRIVISRRRNDDEDAKEEMYSFVTVAEDQSTKGKGTVVVQDA.

Belongs to the eukaryotic ribosomal protein eL31 family.

The polypeptide is Large ribosomal subunit protein eL31 (RPL31) (Chlamydomonas reinhardtii (Chlamydomonas smithii)).